Consider the following 197-residue polypeptide: uncharacterized protein (197 aa).

Residues 1-19 form the signal peptide; the sequence is MKLASLLVGSLMLAVPALA.

The protein localises to the secreted. This is an uncharacterized protein from Arthroderma benhamiae (strain ATCC MYA-4681 / CBS 112371) (Trichophyton mentagrophytes).